The primary structure comprises 655 residues: p-hydroxybenzoic acid efflux pump subunit AaeB (655 aa).

The Periplasmic portion of the chain corresponds to 1–12; the sequence is MGIFSIANQHIR. Residues 13 to 33 traverse the membrane as a helical segment; it reads FAVKLATAIVLALFVGFHFQL. At 34-37 the chain is on the cytoplasmic side; sequence ETPR. A helical membrane pass occupies residues 38 to 58; sequence WAVLTAAIVAAGPAFAAGGEP. At 59–68 the chain is on the periplasmic side; it reads YSGAIRYRGF. A helical membrane pass occupies residues 69–89; that stretch reads LRIIGTFIGCIAGLVIIIAMI. The Cytoplasmic portion of the chain corresponds to 90 to 92; it reads RAP. A helical transmembrane segment spans residues 93–113; it reads LLMILVCCIWAGFCTWISSLV. Over 114–120 the chain is Periplasmic; the sequence is RIENSYA. Residues 121–141 traverse the membrane as a helical segment; it reads WGLAGYTALIIVITIQPEPLL. At 142-151 the chain is on the cytoplasmic side; that stretch reads TPQFAVERCS. Residues 152 to 172 form a helical membrane-spanning segment; that stretch reads EIVIGIVCAIMADLLFSPRSI. The Periplasmic segment spans residues 173 to 369; it reads KQEVDRELES…RTTLSCILGT (197 aa). A helical membrane pass occupies residues 370–390; that stretch reads LFWLWTGWTSGSGAMVMIAVV. Topologically, residues 391-406 are cytoplasmic; sequence TSLAMRLPNPRMVAID. The chain crosses the membrane as a helical span at residues 407 to 427; it reads FIYGTLAALPLGLLYFLVIIP. The Periplasmic segment spans residues 428–430; it reads NTQ. Residues 431 to 451 traverse the membrane as a helical segment; it reads QSMLLLCISLAVLGFFLGIEV. Residues 452–458 are Cytoplasmic-facing; it reads QKRRLGS. The chain crosses the membrane as a helical span at residues 459–479; the sequence is MGALASTINIIVLDNPMTFHF. Topologically, residues 480-481 are periplasmic; it reads SQ. A helical transmembrane segment spans residues 482 to 502; that stretch reads FLDSALGQIVGCVLAFTVILL. Over 503-655 the chain is Cytoplasmic; sequence VRDKSRDRTG…HKYQHALTDS (153 aa).

This sequence belongs to the aromatic acid exporter ArAE (TC 2.A.85) family.

It is found in the cell inner membrane. In terms of biological role, forms an efflux pump with AaeA. Could function as a metabolic relief valve, allowing to eliminate certain compounds when they accumulate to high levels in the cell. This Escherichia coli O6:H1 (strain CFT073 / ATCC 700928 / UPEC) protein is p-hydroxybenzoic acid efflux pump subunit AaeB.